The sequence spans 244 residues: Guanine nucleotide exchange factor rei-1 (244 aa).

Coiled-coil stretches lie at residues 6–39 (DQLISIRKQLENLNNATDDINSYEMKLETVKKQF) and 81–144 (VQQA…KAEK). Residues 221–244 (DQIHQERSSQSSLAPSSDAESDSS) form a disordered region. Low complexity predominate over residues 228 to 238 (SSQSSLAPSSD).

It belongs to the SH3BP5 family. As to quaternary structure, homodimer, tetramer and multimer. Interacts with rab-11.1. Binds preferentially to the GDP-bound form of rab-11.1. In terms of tissue distribution, expressed in germ cells.

It localises to the cytoplasmic granule. It is found in the golgi apparatus membrane. In terms of biological role, guanine nucleotide exchange factor for Rab GTPase Rab-11.1. Spatially and temporally regulates the distribution of Rab-11.1 to target membranes during embryogenesis. Plays a role in cytokinesis, probably by targeting rab-11.1 to the cleavage furrows. This chain is Guanine nucleotide exchange factor rei-1, found in Caenorhabditis elegans.